Here is a 448-residue protein sequence, read N- to C-terminus: Nuclear distribution protein PAC1 (448 aa).

One can recognise a LisH domain in the interval 9–41; that stretch reads QAEELHKSIIAYLAANNFQDSVTAMRTELNLGE. The segment at 74-95 is disordered; sequence SATPTSLSNRKQDPASWLPAGP. WD repeat units follow at residues 102–143, 145–185, 189–236, 239–278, 283–343, 345–384, and 389–444; these read SHRT…RTVK, HTKA…KNIR, GHDH…CLKT, GHSD…PETK, GHEH…IKTL, GHDN…KCVK, and MHEH…TSLR.

This sequence belongs to the WD repeat LIS1/nudF family. In terms of assembly, self-associates. Interacts with NDL1 and dynein.

The protein resides in the cytoplasm. It is found in the cytoskeleton. It localises to the spindle pole. Its function is as follows. Positively regulates the activity of the minus-end directed microtubule motor protein dynein. May enhance dynein-mediated microtubule sliding by targeting dynein to the microtubule plus end. Required for nuclear migration during vegetative growth as well as development. Required for retrograde early endosome (EE) transport from the hyphal tip. Required for localization of dynein to the mitotic spindle poles. Recruits additional proteins to the dynein complex at SPBs. This chain is Nuclear distribution protein PAC1, found in Fusarium vanettenii (strain ATCC MYA-4622 / CBS 123669 / FGSC 9596 / NRRL 45880 / 77-13-4) (Fusarium solani subsp. pisi).